We begin with the raw amino-acid sequence, 649 residues long: Serine/threonine kinase-like domain-containing protein STKLD1 (649 aa).

Over residues 1–13 the composition is skewed to basic and acidic residues; that stretch reads MLGPESDGRRPTQ. Positions 1–23 are disordered; it reads MLGPESDGRRPTQGERGPGYPGE. The 352-residue stretch at 28 to 379 folds into the Protein kinase domain; sequence YQVLYQLNPG…CNQAITSAVL (352 aa). Residues 34 to 42 and Lys57 each bind ATP; that span reads LNPGALGVN. The tract at residues 621–640 is disordered; it reads FSKPGLPPGGSPQPGCTASG.

It belongs to the protein kinase superfamily. Ser/Thr protein kinase family. STKL subfamily.

This Macaca fascicularis (Crab-eating macaque) protein is Serine/threonine kinase-like domain-containing protein STKLD1 (STKLD1).